The sequence spans 901 residues: HTH-type transcriptional regulator MalT (901 aa).

39 to 46 (SPAGYGKT) provides a ligand contact to ATP. The region spanning 829–894 (ELIRTSPLTQ…AAVQHAQKLL (66 aa)) is the HTH luxR-type domain. Residues 853-872 (NEQIAGELEVAATTIKTHIR) constitute a DNA-binding region (H-T-H motif).

It belongs to the MalT family. As to quaternary structure, monomer in solution. Oligomerizes to an active state in the presence of the positive effectors ATP and maltotriose.

With respect to regulation, activated by ATP and maltotriose, which are both required for DNA binding. Functionally, positively regulates the transcription of the maltose regulon whose gene products are responsible for uptake and catabolism of malto-oligosaccharides. Specifically binds to the promoter region of its target genes, recognizing a short DNA motif called the MalT box. This chain is HTH-type transcriptional regulator MalT, found in Escherichia coli O45:K1 (strain S88 / ExPEC).